The chain runs to 735 residues: MAGKCPMGFGTTNPMVRNGGTSNKDWWPNQLNLKILSQHSNKVNPLGSDFDYAKEFSKLDYDALKADLTALMTDSQDWWPADYGHYGPLFIRMAWHSAGTYRTGDGRGGASTGSQRLAPLNSWPDNANLDKARRLLWPIKQKYGNKISWADLMILAGNVALESMGLKTFGFSGGRVDVWEPEEDIYWGKEAQWLATSDKENSRYSGDRDLENPLAAVQMGLIYVNPEGPDGVPDPIKSGIDIRETFARMAMDDEETVALTAGGHTFGKCHGAGDAANVGAEPEAEGLVAQGLGWLSKFLSGKGDDTITSGIEGSWTANPTRWDNEYFDILLSYDWELTKSPAGAWQWIPKNPKEEHLAPAAHDKTKKVTTIMTTADMAMKMDPIYAKISKRFHENPQEFADAFARAWFKLTHRDLGPKSKYIGPEIPKEDLIWQDPIPPINYEIIDEKDIEILKEKLLSSSLGVSKLVSLAWASASTYRDSDKRGGANGARIALEPQRSWESNSYLNLDESLKILETIKGEFNSSNSNKKVSLADLIVLGGCAAVEKAAKDAGFNIKVPFTAGRADATQEQTHVESFSHLEPIADGFRNYSKAKYTLSTEELLIDKAQLLSLTIPEMIVLVGGMRVLGANYANSDLGVFTSNVGVLSNDFFVNLLDMKTAWYPTTQEEDSFVGKDRQSGSMKYSASRVDLLFGSNSQLRAVSEVYAQEDSKEKFVQDFINAWTKVMNLDRFDIKK.

The tryptophyl-tyrosyl-methioninium (Trp-Tyr) (with M-249) cross-link spans 95–223 (WHSAGTYRTG…LAAVQMGLIY (129 aa)). The active-site Proton acceptor is the histidine 96. The tryptophyl-tyrosyl-methioninium (Tyr-Met) (with W-95) cross-link spans 223–249 (YVNPEGPDGVPDPIKSGIDIRETFARM). Histidine 264 is a heme b binding site.

This sequence belongs to the peroxidase family. Peroxidase/catalase subfamily. Homodimer or homotetramer. It depends on heme b as a cofactor. In terms of processing, formation of the three residue Trp-Tyr-Met cross-link is important for the catalase, but not the peroxidase activity of the enzyme.

It carries out the reaction H2O2 + AH2 = A + 2 H2O. The catalysed reaction is 2 H2O2 = O2 + 2 H2O. Functionally, bifunctional enzyme with both catalase and broad-spectrum peroxidase activity. The polypeptide is Catalase-peroxidase (Aliarcobacter butzleri (strain RM4018) (Arcobacter butzleri)).